Consider the following 72-residue polypeptide: Heat shock factor-binding protein 1-like protein 1 (72 aa).

A coiled-coil region spans residues 12–62 (DLLQNAAENLLLEVEEHFQALTTTLNLRMEEMGSRIEDLQRNVDDLMTQAG).

This sequence belongs to the HSBP1 family.

The polypeptide is Heat shock factor-binding protein 1-like protein 1 (Hsbp1l1) (Mus musculus (Mouse)).